Consider the following 188-residue polypeptide: HTH-type transcriptional regulator LmrA (188 aa).

Residues 4–64 (GDSREKILSA…IEAVNEMKEY (61 aa)) enclose the HTH tetR-type domain. The segment at residues 27 to 46 (GLNQIIKESGAPKGSLYYHF) is a DNA-binding region (H-T-H motif).

Acts as a repressor of the lincomycin-resistance (lmrAB) and yxaGH operons. In Bacillus subtilis (strain 168), this protein is HTH-type transcriptional regulator LmrA (lmrA).